The following is a 199-amino-acid chain: dITP/XTP pyrophosphatase (199 aa).

7–12 (TGNKGK) lines the substrate pocket. The active-site Proton acceptor is aspartate 71. Aspartate 71 serves as a coordination point for Mg(2+). Substrate contacts are provided by residues alanine 72, 154–157 (FGYD), lysine 177, and 182–183 (HR).

It belongs to the HAM1 NTPase family. Homodimer. Mg(2+) serves as cofactor.

The enzyme catalyses XTP + H2O = XMP + diphosphate + H(+). It catalyses the reaction dITP + H2O = dIMP + diphosphate + H(+). It carries out the reaction ITP + H2O = IMP + diphosphate + H(+). Functionally, pyrophosphatase that catalyzes the hydrolysis of nucleoside triphosphates to their monophosphate derivatives, with a high preference for the non-canonical purine nucleotides XTP (xanthosine triphosphate), dITP (deoxyinosine triphosphate) and ITP. Seems to function as a house-cleaning enzyme that removes non-canonical purine nucleotides from the nucleotide pool, thus preventing their incorporation into DNA/RNA and avoiding chromosomal lesions. The chain is dITP/XTP pyrophosphatase from Bdellovibrio bacteriovorus (strain ATCC 15356 / DSM 50701 / NCIMB 9529 / HD100).